Reading from the N-terminus, the 394-residue chain is MSKEKFQRLKPHINVGTIGHVDHGKTTLTAAITTVLSKKFGGSARAFDQIDNAPEEKARGITINTSHVEYDTEFRHYAHVDCPGHADYIKNMITGAAQMDGAILVVAATDGPMPQTREHILLGRQVGVPYIIVFLNKCDMVDDEELLELVEMEVRDLLTQYDFPGDDTPIIRGSALKALEGDPEWESKIIDLSKFLDSYIPEPKRAVDQPFLLPIEDVFSISGRGTVVTGRVEKGIIKVGEEVEIVGIKKTTKTTCTGVEMFRKLLDEGRAGENVGVLLRGTKRDEIERGQVLAKPGSIHPHTTFESEVYVLSKEEGGRHTPFFKGYRPQFYFRTTDVTGSIELPEGIEMVMPGDNIKMTVTLINPIAMADGLRFAIREGGRTVGAGVVSKVLL.

The region spanning 10-204 (KPHINVGTIG…FLDSYIPEPK (195 aa)) is the tr-type G domain. The G1 stretch occupies residues 19–26 (GHVDHGKT). 19 to 26 (GHVDHGKT) serves as a coordination point for GTP. Threonine 26 contributes to the Mg(2+) binding site. Residues 60–64 (GITIN) are G2. The G3 stretch occupies residues 81–84 (DCPG). GTP is bound by residues 81–85 (DCPGH) and 136–139 (NKCD). Positions 136–139 (NKCD) are G4. The segment at 174-176 (SAL) is G5.

It belongs to the TRAFAC class translation factor GTPase superfamily. Classic translation factor GTPase family. EF-Tu/EF-1A subfamily. As to quaternary structure, monomer.

Its subcellular location is the cytoplasm. The catalysed reaction is GTP + H2O = GDP + phosphate + H(+). Its function is as follows. GTP hydrolase that promotes the GTP-dependent binding of aminoacyl-tRNA to the A-site of ribosomes during protein biosynthesis. In Buchnera aphidicola subsp. Acyrthosiphon pisum (strain 5A), this protein is Elongation factor Tu.